Here is a 149-residue protein sequence, read N- to C-terminus: Transcriptional repressor NrdR (149 aa).

A zinc finger lies at 3 to 34 (CPFCSAVDTKVIDSRLVGEGSQVRRRRQCLVC). One can recognise an ATP-cone domain in the interval 49-139 (PRVIKSNEVR…VYRSFEDIRE (91 aa)).

It belongs to the NrdR family. Zn(2+) serves as cofactor.

Its function is as follows. Negatively regulates transcription of bacterial ribonucleotide reductase nrd genes and operons by binding to NrdR-boxes. This chain is Transcriptional repressor NrdR, found in Pectobacterium carotovorum subsp. carotovorum (strain PC1).